Reading from the N-terminus, the 371-residue chain is Protein IQ-DOMAIN 7 (371 aa).

Positions M1 to K32 are disordered. Residues P17–S29 are compositionally biased toward basic and acidic residues. 2 IQ domains span residues R93 to R121 and I122 to A144. The calmodulin-binding stretch occupies residues I125–C141. Disordered stretches follow at residues S285–F308 and L327–S371. Composition is skewed to polar residues over residues S297–F308 and L327–S341.

This sequence belongs to the IQD family. In terms of assembly, binds to multiple calmodulin (CaM) in the presence of Ca(2+) and CaM-like proteins.

It localises to the nucleus. The protein localises to the nucleus envelope. Its subcellular location is the cytoplasm. The protein resides in the cytoskeleton. In terms of biological role, may be involved in cooperative interactions with calmodulins or calmodulin-like proteins. Recruits calmodulin proteins to microtubules, thus being a potential scaffold in cellular signaling and trafficking. May associate with nucleic acids and regulate gene expression at the transcriptional or post-transcriptional level. This Arabidopsis thaliana (Mouse-ear cress) protein is Protein IQ-DOMAIN 7.